Consider the following 694-residue polypeptide: Lon-like protease BrxL (694 aa).

It belongs to the BrxL family.

BREX systems (bacteriophage exclusion) provide immunity against bacteriophage. Part of a type 1 BREX system which protects against dsDNA phage. This system allows phage adsorption but prevents phage DNA replication, without degradation of the phage DNA. Methylation of bacterial DNA by PglX guides self/non-self discrimination. When the brxA-brxB-brxC-pglX-pglZ-brxL genes are transformed into a susceptible E.coli strain (BW25113) they confer very high resistance to infection by bacteriophage VR7 and VpaE1, about 100-fold protection against lambda, T5 and T7 and no protection against RNA phage Qbeta, ssDNA phage M13 or dSDNA phage T4 and VR5. Glycosylated phage DNA is not susceptible to BREX. The BREX system does not confer resistance to lysogenic lambda phage, i.e. prophage that are integrated into the chromosomal DNA and then induced to form phage. Expression of this protein alone is toxic. The chain is Lon-like protease BrxL from Escherichia coli O9:H4 (strain HS).